The following is a 599-amino-acid chain: Elongation factor 4 (599 aa).

Positions 5–187 (SHIRNFSIIA…RLVAVIPPPT (183 aa)) constitute a tr-type G domain. Residues 17 to 22 (DHGKST) and 134 to 137 (NKMD) contribute to the GTP site.

This sequence belongs to the TRAFAC class translation factor GTPase superfamily. Classic translation factor GTPase family. LepA subfamily.

The protein resides in the cell inner membrane. It carries out the reaction GTP + H2O = GDP + phosphate + H(+). In terms of biological role, required for accurate and efficient protein synthesis under certain stress conditions. May act as a fidelity factor of the translation reaction, by catalyzing a one-codon backward translocation of tRNAs on improperly translocated ribosomes. Back-translocation proceeds from a post-translocation (POST) complex to a pre-translocation (PRE) complex, thus giving elongation factor G a second chance to translocate the tRNAs correctly. Binds to ribosomes in a GTP-dependent manner. This chain is Elongation factor 4, found in Stutzerimonas stutzeri (strain A1501) (Pseudomonas stutzeri).